The following is a 298-amino-acid chain: Transcription factor SRM1 (298 aa).

The SANT domain occupies 7–62; sequence SDGSVWSREDDIAFERALANNTDESEERWEKIAADVPGKSVEQIKEHYELLVEDVT. The tract at residues 68–118 is disordered; the sequence is CVPLPAYGSPEGSNGHAGDEGASSKKGGNSHAGESNQAGKSKSDQERRKGI. Basic and acidic residues predominate over residues 108–118; it reads SKSDQERRKGI. The HTH myb-type domain maps to 111–168; the sequence is DQERRKGIAWTEDEHRLFLLGLDKYGKGDWRSISRNFVVTRTPTQVASHAQKYFIRLN. Positions 140–164 form a DNA-binding region, H-T-H motif; that stretch reads WRSISRNFVVTRTPTQVASHAQKYF. The span at 182 to 200 shows a compositional bias: polar residues; that stretch reads ITSVGNADVSTPQGPITGQ. The interval 182–245 is disordered; the sequence is ITSVGNADVS…GPPMYGTPAI (64 aa). Positions 201 to 215 are enriched in low complexity; the sequence is NNSNNNNNNNNNNSS.

Expressed in young seedlings, developing leaves, sepals and trichomes.

It localises to the nucleus. Functionally, transcription activator that coordinates abscisic acid (ABA) biosynthesis and signaling-related genes via binding to the specific promoter motif 5'-(A/T)AACCAT-3'. Represses ABA-mediated salt (e.g. NaCl and KCl) stress tolerance. Regulates leaf shape and promotes vegetative growth. This chain is Transcription factor SRM1, found in Arabidopsis thaliana (Mouse-ear cress).